The sequence spans 99 residues: Transcription and mRNA export factor SUS1 (99 aa).

It belongs to the ENY2 family. In terms of assembly, component of the nuclear pore complex (NPC)-associated TREX-2 complex (transcription and export complex 2), composed of at least SUS1, SAC3, THP1, SEM1, and CDC31. TREX-2 contains 2 SUS1 chains. The TREX-2 complex interacts with the nucleoporin NUP1. Component of the 1.8 MDa SAGA transcription coactivator-HAT complex. SAGA is built of 5 distinct domains with specialized functions. Within the SAGA complex, SUS1, SGF11, SGF73 and UBP8 form an additional subcomplex of SAGA called the DUB module (deubiquitination module). Interacts directly with THP1, SAC3, SGF11, and with the RNA polymerase II.

The protein localises to the nucleus. Its subcellular location is the nucleoplasm. The protein resides in the cytoplasm. It is found in the P-body. Functionally, involved in mRNA export coupled transcription activation by association with both the TREX-2 and the SAGA complexes. At the promoters, SAGA is required for recruitment of the basal transcription machinery. It influences RNA polymerase II transcriptional activity through different activities such as TBP interaction and promoter selectivity, interaction with transcription activators, and chromatin modification through histone acetylation and deubiquitination. Within the SAGA complex, participates in a subcomplex required for deubiquitination of H2B and for the maintenance of steady-state H3 methylation levels. The TREX-2 complex functions in docking export-competent ribonucleoprotein particles (mRNPs) to the nuclear entrance of the nuclear pore complex (nuclear basket). TREX-2 participates in mRNA export and accurate chromatin positioning in the nucleus by tethering genes to the nuclear periphery. May also be involved in cytoplasmic mRNA decay by interaction with components of P-bodies. This is Transcription and mRNA export factor SUS1 from Eremothecium gossypii (strain ATCC 10895 / CBS 109.51 / FGSC 9923 / NRRL Y-1056) (Yeast).